A 173-amino-acid chain; its full sequence is Translation initiation factor IF-3 (173 aa).

Belongs to the IF-3 family. As to quaternary structure, monomer.

It localises to the cytoplasm. IF-3 binds to the 30S ribosomal subunit and shifts the equilibrium between 70S ribosomes and their 50S and 30S subunits in favor of the free subunits, thus enhancing the availability of 30S subunits on which protein synthesis initiation begins. The polypeptide is Translation initiation factor IF-3 (Clostridium tetani (strain Massachusetts / E88)).